The primary structure comprises 151 residues: Deoxyuridine 5'-triphosphate nucleotidohydrolase (151 aa).

Residues 70 to 72, Asn83, 87 to 89, and Met97 contribute to the substrate site; these read RSG and LID.

This sequence belongs to the dUTPase family. Mg(2+) is required as a cofactor.

The enzyme catalyses dUTP + H2O = dUMP + diphosphate + H(+). It participates in pyrimidine metabolism; dUMP biosynthesis; dUMP from dCTP (dUTP route): step 2/2. In terms of biological role, this enzyme is involved in nucleotide metabolism: it produces dUMP, the immediate precursor of thymidine nucleotides and it decreases the intracellular concentration of dUTP so that uracil cannot be incorporated into DNA. The chain is Deoxyuridine 5'-triphosphate nucleotidohydrolase from Sodalis glossinidius (strain morsitans).